A 246-amino-acid chain; its full sequence is Small ribosomal subunit protein uS2 (246 aa).

It belongs to the universal ribosomal protein uS2 family.

In Exiguobacterium sp. (strain ATCC BAA-1283 / AT1b), this protein is Small ribosomal subunit protein uS2.